Reading from the N-terminus, the 726-residue chain is WD repeat-containing and planar cell polarity effector protein fritz homolog (726 aa).

WD repeat units follow at residues 305 to 343 and 344 to 383; these read LRSK…TLLA and QAEL…INIQ. The segment covering 642-660 has biased composition (polar residues); it reads SSGSTPKHTIQQKIPNGPS. The disordered stretch occupies residues 642-717; that stretch reads SSGSTPKHTI…RRQDTEDVGS (76 aa). Residues 672 to 685 show a composition bias toward acidic residues; it reads MEETEEEEEEEEEA. A compositionally biased stretch (basic and acidic residues) spans 701–712; that stretch reads GELREDHRRQDT.

The protein belongs to the WD repeat fritz family. As to quaternary structure, component of the CPLANE (ciliogenesis and planar polarity effectors) complex, composed of INTU, FUZ and WDPCP. Interacts with CPLANE1.

Its subcellular location is the cell membrane. It is found in the cytoplasm. The protein resides in the cytoskeleton. It localises to the cilium axoneme. The protein localises to the cilium basal body. Probable effector of the planar cell polarity signaling pathway which regulates the septin cytoskeleton in both ciliogenesis and collective cell movements. Together with FUZ and WDPCP proposed to function as core component of the CPLANE (ciliogenesis and planar polarity effectors) complex involved in the recruitment of peripheral IFT-A proteins to basal bodies. Binds phosphatidylinositol 3-phosphate with highest affinity, followed by phosphatidylinositol 4-phosphate and phosphatidylinositol 5-phosphate. This is WD repeat-containing and planar cell polarity effector protein fritz homolog (Wdpcp) from Rattus norvegicus (Rat).